Consider the following 739-residue polypeptide: MLLTTEPTATQIRDERIYATMGLSDDEYALVVSLLGREPNYTEIGLFSVMWSEHCSYKNSKPVLRKFPTTGKHVLQGPGEGAGIVDIGDGQAVAFKIESHNHPSAIEPYQGAATGVGGIIRDIFSMGARPIALLNSLRFGDLNESRVKHLFGHVVSGIAGYGNCVGIPTVGGEVAFDPAYSGNPLVNAMCVGFIRHEDIQKGIAEGVGNSVMYVGATTGRDGIHGATFASEELGEDADEKRPAVQVGDPFMEKLLIEACLEVIKHPALVGIQDMGAAGLTSSSAEMASKAGMGIEMNLDLVPQRETGMTPYEMMLSESQERMLLVVKAGHEDEIEAIVTKWGLHAIKVGEVIEEKVLRLVHQGEVAAEVPVDALAEDAPVYHKPSKVPAYYEAFQAMEPVTPIVEDMMATWKDVLAMPSIASKRWVYEQYDHMVQTSTVVAPGSDAAVIRIRETEKSLAMTTDCNAKYVYLDPRVGGAIAVAEAARNIVASGAEPLALTDCLNFGSPDKPEGFWQLDQAVEGMAEACRTLDTPVIGGNVSLYNESNGQAIYPTPVVGMVGLIEKPEHITTSFAKQAGDVVFLLGETKAEFGGSALQMLQDGKVSGHAPTLDLENERQTQKVLLHAIREGLVTAAHDVSEGGLAAALPELVFGTGFGVDVTIDTDLVTALFSESQSRFLVTVDKAHAEAFARMTNGTAIGTVTEASTLVVRASDRLIEMDVQELERVWEGAIPCYMTSEA.

H54 is a catalytic residue. Residues Y57 and K96 each coordinate ATP. E98 contributes to the Mg(2+) binding site. Residues 99-102 and R121 each bind substrate; that span reads SHNH. The Proton acceptor role is filled by H100. Residue D122 participates in Mg(2+) binding. Q245 contributes to the substrate binding site. D273 is a Mg(2+) binding site. A substrate-binding site is contributed by 317-319; that stretch reads ESQ. 2 residues coordinate ATP: D500 and G537. N538 lines the Mg(2+) pocket. S540 is a binding site for substrate.

It belongs to the FGAMS family. As to quaternary structure, monomer. Part of the FGAM synthase complex composed of 1 PurL, 1 PurQ and 2 PurS subunits.

It is found in the cytoplasm. It carries out the reaction N(2)-formyl-N(1)-(5-phospho-beta-D-ribosyl)glycinamide + L-glutamine + ATP + H2O = 2-formamido-N(1)-(5-O-phospho-beta-D-ribosyl)acetamidine + L-glutamate + ADP + phosphate + H(+). Its pathway is purine metabolism; IMP biosynthesis via de novo pathway; 5-amino-1-(5-phospho-D-ribosyl)imidazole from N(2)-formyl-N(1)-(5-phospho-D-ribosyl)glycinamide: step 1/2. Part of the phosphoribosylformylglycinamidine synthase complex involved in the purines biosynthetic pathway. Catalyzes the ATP-dependent conversion of formylglycinamide ribonucleotide (FGAR) and glutamine to yield formylglycinamidine ribonucleotide (FGAM) and glutamate. The FGAM synthase complex is composed of three subunits. PurQ produces an ammonia molecule by converting glutamine to glutamate. PurL transfers the ammonia molecule to FGAR to form FGAM in an ATP-dependent manner. PurS interacts with PurQ and PurL and is thought to assist in the transfer of the ammonia molecule from PurQ to PurL. This Exiguobacterium sp. (strain ATCC BAA-1283 / AT1b) protein is Phosphoribosylformylglycinamidine synthase subunit PurL.